We begin with the raw amino-acid sequence, 343 residues long: Probable transcription factor MYB58 (343 aa).

Residues 1 to 30 (MARAPGGVRRRSGRRGAGGGGAGGGGEALR) are disordered. The segment covering 15-27 (RGAGGGGAGGGGE) has biased composition (gly residues). 2 HTH myb-type domains span residues 26–78 (GEAL…VNKL) and 79–134 (RPNL…KRLA). DNA-binding regions (H-T-H motif) lie at residues 54–77 (WSSIRSKGLLPRTGKSCRLRWVNK) and 107–130 (WARIATYLQGRTDNDVKNFWSTRQ). Disordered regions lie at residues 137-169 (LRGPLPAARPNKHNSGKGKAPSSSSLDSQTATF), 219-238 (PPADGEASSSNAAQSAPPPL), and 307-343 (DDLPPNMFDDAVDQPPPPPPPPPPPSPSPSPSRDDVL). Residues 157–169 (PSSSSLDSQTATF) are compositionally biased toward polar residues. The segment covering 320–336 (QPPPPPPPPPPPSPSPS) has biased composition (pro residues).

It localises to the nucleus. In terms of biological role, probable transcription factor. The sequence is that of Probable transcription factor MYB58 from Oryza sativa subsp. japonica (Rice).